A 297-amino-acid polypeptide reads, in one-letter code: Ubiquinol oxidase 2, mitochondrial (297 aa).

The disordered stretch occupies residues 17–43; sequence VALNDKQHDKKVENGGAAASGGGDGGD. The helical transmembrane segment at 122-142 threads the bilayer; sequence AMMLETVAAVPGMVGGMLLHC. Residues Glu-126, Glu-165, and His-168 each contribute to the Fe cation site. Residues 184–204 form a helical membrane-spanning segment; it reads ALVFAVQGVFINAYFVTYLLS. Glu-216, Glu-267, and His-270 together coordinate Fe cation.

It belongs to the alternative oxidase family. Homodimer; disulfide-linked. Fe cation serves as cofactor.

It is found in the mitochondrion inner membrane. It carries out the reaction 2 a ubiquinol + O2 = 2 a ubiquinone + 2 H2O. In terms of biological role, catalyzes the cyanide-resistant oxidation of ubiquinol and the reduction of molecular oxygen to water, but does not translocate protons and consequently is not linked to oxidative phosphorylation. May increase respiration when the cytochrome respiratory pathway is restricted, or in response to low temperatures. The protein is Ubiquinol oxidase 2, mitochondrial (AOX2) of Nicotiana tabacum (Common tobacco).